The primary structure comprises 283 residues: MLIIETLPLLRQQIRRLRMEGKRVALVPTMGNLHDGHMKLVDEAKARADVVVVSIFVNPMQFDRPEDLARYPRTLQEDCEKLNKRKVDLVFAPSVKEIYPNGTETHTYVDVPGLSTMLEGASRPGHFRGVSTIVSKLFNLVQPDIACFGEKDFQQLALIRKMVADMGFDIEIVGVPIMRAKDGLALSSRNGYLTAEQRKIAPGLYKVLSSIADKLQVGERDLDEIITIAGQELNEKGFRADDIQIRDADTLLEVSETSKRAVILVAAWLGDARLIDNKMVELA.

Residue 30-37 coordinates ATP; that stretch reads MGNLHDGH. The Proton donor role is filled by His-37. Gln-61 provides a ligand contact to (R)-pantoate. Gln-61 is a beta-alanine binding site. 149 to 152 lines the ATP pocket; the sequence is GEKD. Gln-155 provides a ligand contact to (R)-pantoate. 186-189 contacts ATP; the sequence is LSSR.

The protein belongs to the pantothenate synthetase family. As to quaternary structure, homodimer.

It is found in the cytoplasm. The catalysed reaction is (R)-pantoate + beta-alanine + ATP = (R)-pantothenate + AMP + diphosphate + H(+). It functions in the pathway cofactor biosynthesis; (R)-pantothenate biosynthesis; (R)-pantothenate from (R)-pantoate and beta-alanine: step 1/1. Catalyzes the condensation of pantoate with beta-alanine in an ATP-dependent reaction via a pantoyl-adenylate intermediate. The chain is Pantothenate synthetase from Escherichia coli (strain ATCC 8739 / DSM 1576 / NBRC 3972 / NCIMB 8545 / WDCM 00012 / Crooks).